A 505-amino-acid chain; its full sequence is Monocarboxylate transporter 10 (505 aa).

Residues 1–14 (MTEPEPTLEQEPTP) show a composition bias toward acidic residues. Residues 1–64 (MTEPEPTLEQ…EQKSPEEFEP (64 aa)) are disordered. Residues 1-66 (MTEPEPTLEQ…KSPEEFEPPE (66 aa)) are Cytoplasmic-facing. The segment covering 15–31 (EPEPTQEPTPEPTPEPE) has biased composition (pro residues). The span at 32–41 (PTQEPESEPE) shows a compositional bias: acidic residues. Residues 67–87 (GGWGWVVMLASMWCNGSVFGI) traverse the membrane as a helical segment. Residues 88-114 (QNAFGIMFVYLLNEFGSEHDADLRFKT) are Extracellular-facing. The chain crosses the membrane as a helical span at residues 115–135 (AWVGSLSMGMIFFCSPIVSVF). Residues 136-142 (TDLLGCR) are Cytoplasmic-facing. The chain crosses the membrane as a helical span at residues 143–163 (ITAVGGAAVGCVGLLASSFVT). Residues 164 to 171 (SLGPMYFT) lie on the Extracellular side of the membrane. A helical membrane pass occupies residues 172 to 192 (YGIVFACGCSFAYQPSLVILG). Topologically, residues 193-204 (HYFKRRLGLVNG) are cytoplasmic. The helical transmembrane segment at 205 to 225 (IVTAGSSVFTITLPYMLSGLL) threads the bilayer. Residues 226-235 (KSVGLYHTLR) lie on the Extracellular side of the membrane. Residues 236-256 (VLAIFMFILMLAGLTYKPLLP) form a helical membrane-spanning segment. At 257–286 (KPVSSSKPGSRCPPLSRIFNVNIWKSLGYR) the chain is on the cytoplasmic side. A helical membrane pass occupies residues 287 to 307 (IWAFGIPAALYGYFVPYVHLM). Over 308 to 321 (THVEERFGPEANKE) the chain is Extracellular. The helical transmembrane segment at 322–342 (VLLACIGITSGVGRLIFGRVA) threads the bilayer. Residue D343 is a topological domain, cytoplasmic. The helical transmembrane segment at 344 to 364 (YVPGVNKVFLQVSSFMVIGVM) threads the bilayer. Residues 365-377 (SMMIPLCHVFGGL) are Extracellular-facing. The helical transmembrane segment at 378-400 (IAVCLLMGLFDGCFICIMAPIAF) threads the bilayer. The Cytoplasmic segment spans residues 401 to 411 (ELVGSQNVSQA). The chain crosses the membrane as a helical span at residues 412-432 (IGFLLGMMSIPMTVGPPIAGF). Over 433 to 443 (LRDRLGSYDVA) the chain is Extracellular. The helical transmembrane segment at 444–464 (FYLAGIPPLIGGAVLCAIPWV) threads the bilayer. Residues 465 to 505 (EARRKRREAANTAENTEKMLESRSPPLEDTVCRTEEPESVI) lie on the Cytoplasmic side of the membrane. Residues 474–505 (ANTAENTEKMLESRSPPLEDTVCRTEEPESVI) are disordered. Residues 494-505 (TVCRTEEPESVI) show a composition bias toward basic and acidic residues.

This sequence belongs to the major facilitator superfamily. Monocarboxylate porter (TC 2.A.1.13) family.

It localises to the cell membrane. Its subcellular location is the basolateral cell membrane. The enzyme catalyses L-tryptophan(in) = L-tryptophan(out). It catalyses the reaction L-tyrosine(in) = L-tyrosine(out). It carries out the reaction L-phenylalanine(in) = L-phenylalanine(out). The catalysed reaction is 3,3',5-triiodo-L-thyronine(out) = 3,3',5-triiodo-L-thyronine(in). The enzyme catalyses L-thyroxine(out) = L-thyroxine(in). In terms of biological role, sodium- and proton-independent thyroid hormones and aromatic acids transporter. Mediates both uptake and efflux of 3,5,3'-triiodothyronine (T3) and 3,5,3',5'-tetraiodothyronine (T4) with high affinity, suggesting a role in the homeostasis of thyroid hormone levels. Responsible for low affinity bidirectional transport of the aromatic amino acids, such as phenylalanine, tyrosine, tryptophan and L-3,4-dihydroxyphenylalanine (L-dopa). Plays an important role in homeostasis of aromatic amino acids. This chain is Monocarboxylate transporter 10 (slc16a10), found in Danio rerio (Zebrafish).